Consider the following 493-residue polypeptide: Probable mannosyl-oligosaccharide alpha-1,2-mannosidase 1B (493 aa).

The signal sequence occupies residues 1 to 18; it reads MHLPSLSVALALVSSSLA. 2 N-linked (GlcNAc...) asparagine glycosylation sites follow: N87 and N174. C324 and C353 form a disulfide bridge. E367 (proton donor) is an active-site residue. Residue N489 is glycosylated (N-linked (GlcNAc...) asparagine).

This sequence belongs to the glycosyl hydrolase 47 family. Monomer. Ca(2+) serves as cofactor. Requires Mg(2+) as cofactor.

It localises to the cytoplasmic vesicle lumen. It carries out the reaction N(4)-(alpha-D-Man-(1-&gt;2)-alpha-D-Man-(1-&gt;2)-alpha-D-Man-(1-&gt;3)-[alpha-D-Man-(1-&gt;2)-alpha-D-Man-(1-&gt;3)-[alpha-D-Man-(1-&gt;2)-alpha-D-Man-(1-&gt;6)]-alpha-D-Man-(1-&gt;6)]-beta-D-Man-(1-&gt;4)-beta-D-GlcNAc-(1-&gt;4)-beta-D-GlcNAc)-L-asparaginyl-[protein] (N-glucan mannose isomer 9A1,2,3B1,2,3) + 4 H2O = N(4)-(alpha-D-Man-(1-&gt;3)-[alpha-D-Man-(1-&gt;3)-[alpha-D-Man-(1-&gt;6)]-alpha-D-Man-(1-&gt;6)]-beta-D-Man-(1-&gt;4)-beta-D-GlcNAc-(1-&gt;4)-beta-D-GlcNAc)-L-asparaginyl-[protein] (N-glucan mannose isomer 5A1,2) + 4 beta-D-mannose. The catalysed reaction is N(4)-(alpha-D-Man-(1-&gt;2)-alpha-D-Man-(1-&gt;2)-alpha-D-Man-(1-&gt;3)-[alpha-D-Man-(1-&gt;3)-[alpha-D-Man-(1-&gt;2)-alpha-D-Man-(1-&gt;6)]-alpha-D-Man-(1-&gt;6)]-beta-D-Man-(1-&gt;4)-beta-D-GlcNAc-(1-&gt;4)-beta-D-GlcNAc)-L-asparaginyl-[protein] (N-glucan mannose isomer 8A1,2,3B1,3) + 3 H2O = N(4)-(alpha-D-Man-(1-&gt;3)-[alpha-D-Man-(1-&gt;3)-[alpha-D-Man-(1-&gt;6)]-alpha-D-Man-(1-&gt;6)]-beta-D-Man-(1-&gt;4)-beta-D-GlcNAc-(1-&gt;4)-beta-D-GlcNAc)-L-asparaginyl-[protein] (N-glucan mannose isomer 5A1,2) + 3 beta-D-mannose. It participates in protein modification; protein glycosylation. Its function is as follows. Involved in the maturation of Asn-linked oligosaccharides. Progressively trims alpha-1,2-linked mannose residues from Man(9)GlcNAc(2) to produce Man(5)GlcNAc(2). The sequence is that of Probable mannosyl-oligosaccharide alpha-1,2-mannosidase 1B (mns1B) from Neosartorya fischeri (strain ATCC 1020 / DSM 3700 / CBS 544.65 / FGSC A1164 / JCM 1740 / NRRL 181 / WB 181) (Aspergillus fischerianus).